The sequence spans 156 residues: Oleosin Zm-I (156 aa).

The disordered stretch occupies residues 1–30 (MADHHRGATGGGGGYGDLQRGGGMHGEAQQ). At A2 the chain carries N-acetylalanine. Residues 2 to 42 (ADHHRGATGGGGGYGDLQRGGGMHGEAQQQQKQGAMMTALK) form a polar region. Gly residues predominate over residues 8–25 (ATGGGGGYGDLQRGGGMH). The hydrophobic stretch occupies residues 43–114 (AATAATFGGS…AALSVFSWMY (72 aa)). Transmembrane regions (helical) follow at residues 51–71 (GSML…LTVA) and 95–115 (GFVT…WMYK).

Belongs to the oleosin family. The N-terminus is blocked.

It localises to the lipid droplet. The protein localises to the membrane. Its function is as follows. May have a structural role to stabilize the lipid body during desiccation of the seed by preventing coalescence of the oil. Probably interacts with both lipid and phospholipid moieties of lipid bodies. May also provide recognition signals for specific lipase anchorage in lipolysis during seedling growth. This Zea mays (Maize) protein is Oleosin Zm-I (OLE16).